A 254-amino-acid polypeptide reads, in one-letter code: Claudin-16 (254 aa).

Residues 1–22 (MGPGLAASHVSFPDSLLAKMRD) are Cytoplasmic-facing. A helical membrane pass occupies residues 23–43 (LLQYVACFFAFFSAGFLVVAT). The Extracellular segment spans residues 44–98 (WTDCWMVNADDSLEVSTKCRGLWWECVTNAFDGIRTCDEYDSILAEHSLKLVVTR). Residues 99–119 (ALMITADILAGFGFITLLLGL) form a helical membrane-spanning segment. Topologically, residues 120–134 (DCVKFLPDEPYIKVR) are cytoplasmic. The chain crosses the membrane as a helical span at residues 135–155 (ISFVAGTTLLIAGAPGIIGSV). Over 156 to 188 (WYAVDVYVERSSLVLHNIFLGIQYKFGWSCWLG) the chain is Extracellular. Residues 189–209 (MAGSLGCFLAGAILTCCLYLF) form a helical membrane-spanning segment. Topologically, residues 210 to 254 (KDVGPERSYPYSTRKAYSTTAVSMPRSHAIPRTQTAKMYAVDTRV) are cytoplasmic. The Interaction with TJP1 motif lies at 252-254 (TRV).

This sequence belongs to the claudin family. In terms of assembly, can form heteropolymeric tight junction strands with other claudins. Interacts with CLDN19. Interacts (via PDZ-binding motif TRV) with TJP1 (via PDZ domain). Cannot form tight junction strands on its own. Expressed preferentially in kidney.

It is found in the cell junction. The protein resides in the tight junction. Its subcellular location is the cell membrane. It carries out the reaction Mg(2+)(in) = Mg(2+)(out). It catalyses the reaction Ca(2+)(in) = Ca(2+)(out). The catalysed reaction is Na(+)(in) = Na(+)(out). The enzyme catalyses K(+)(in) = K(+)(out). It carries out the reaction Rb(+)(in) = Rb(+)(out). It catalyses the reaction Cs(+)(in) = Cs(+)(out). The catalysed reaction is Li(+)(in) = Li(+)(out). Forms paracellular channels: coassembles with CLDN19 into tight junction strands with cation-selective channels through the strands, conveying epithelial permeability in a process known as paracellular tight junction permeability. Involved in the maintenance of ion gradients along the nephron. In the thick ascending limb (TAL) of Henle's loop, facilitates sodium paracellular permeability from the interstitial compartment to the lumen, contributing to the lumen-positive transepithelial potential that drives paracellular magnesium and calcium reabsorption. This chain is Claudin-16 (CLDN16), found in Bos taurus (Bovine).